The primary structure comprises 201 residues: UPF0177 protein YajF (201 aa).

5 helical membrane passes run 10 to 30, 44 to 64, 82 to 102, 119 to 139, and 159 to 179; these read TVIL…YVEY, ITVN…MLGI, ILIL…SQFI, VMGS…APIL, and FVFS…VFLI.

Belongs to the UPF0177 family.

Its subcellular location is the cell membrane. The chain is UPF0177 protein YajF (yajF) from Lactococcus lactis subsp. lactis (strain IL1403) (Streptococcus lactis).